The sequence spans 540 residues: Putative serine protease F56F10.1 (540 aa).

The signal sequence occupies residues 1 to 16 (MLRNLLLLLLPLLIEA). Residues Asn58 and Asn87 are each glycosylated (N-linked (GlcNAc...) asparagine). The Charge relay system role is filled by Ser182. Residues Asn270, Asn300, Asn317, Asn343, Asn441, and Asn449 are each glycosylated (N-linked (GlcNAc...) asparagine). Asp453 serves as the catalytic Charge relay system. Asn475 carries N-linked (GlcNAc...) asparagine glycosylation. His479 (charge relay system) is an active-site residue.

The protein belongs to the peptidase S28 family.

This Caenorhabditis elegans protein is Putative serine protease F56F10.1.